A 597-amino-acid polypeptide reads, in one-letter code: HECT-type ubiquitin ligase-interacting protein creD (597 aa).

3 disordered regions span residues 375–398 (EVDP…GTLS), 439–492 (ASEH…MATP), and 576–597 (SRSH…RGRA). Residues 452 to 466 (GPPSGSNTHGSNTHA) are compositionally biased toward polar residues. The span at 472 to 483 (LSRRASDEDVHD) shows a compositional bias: basic and acidic residues.

The protein belongs to the arrestin family. Interacts with hulA.

Its function is as follows. Component of the regulatory network controlling carbon source utilization through ubiquitination and deubiquitination involving creA, creB, creC, creD and acrB. May be involved in signaling by recognizing appropriately phosphorylated substrates via its arrestin domains and then recruit a HECT-type ubiquitin ligase such as hulA, leading to ubiquitination of the substrate, providing a link between ubiquitination and phosphorylation in protein regulation and stability. The polypeptide is HECT-type ubiquitin ligase-interacting protein creD (creD) (Emericella nidulans (strain FGSC A4 / ATCC 38163 / CBS 112.46 / NRRL 194 / M139) (Aspergillus nidulans)).